Here is a 351-residue protein sequence, read N- to C-terminus: MTVDRLTSRSRAAGUAAKIAPGDLERILATLPRDPREGERVVVGTRDNEDAAIVRVPGGKAIVQTLDFFTPIVDDPYLFGQIAAANALSDVYAMGGEPWCALNIVCFPVKELPEEILADILRGGADKVREAGAVLVGGHSIEDESIKYGLSVTGIIDPDCYATNTGLRPGDVLLLTKPLGSGVLATAVKAGWDGFEAHEQELGRWGAMLNRAGGRVIRELGLAAATDVTGFGLGGHLLEMANASNMSVHVDVSTLPLMPAVLDLVATGLLPAGSHANRHFCSGNVSVHPEVDSLLVDIVFDAQTSGGLILAVPPHLVDDACSILRAEDAPFWRIGHVEEMGEGVSRLVLQP.

Residue U15 is part of the active site. Residue U15 is a non-standard amino acid, selenocysteine. ATP contacts are provided by residues K18 and 47-49; that span reads DNE. Mg(2+) is bound at residue D50. ATP contacts are provided by residues D67, D90, and 138–140; that span reads GHS. Residue D90 participates in Mg(2+) binding. D227 provides a ligand contact to Mg(2+).

Belongs to the selenophosphate synthase 1 family. Class I subfamily. In terms of assembly, homodimer. It depends on Mg(2+) as a cofactor.

It catalyses the reaction hydrogenselenide + ATP + H2O = selenophosphate + AMP + phosphate + 2 H(+). In terms of biological role, synthesizes selenophosphate from selenide and ATP. In Nitratidesulfovibrio vulgaris (strain DP4) (Desulfovibrio vulgaris), this protein is Selenide, water dikinase.